Here is a 328-residue protein sequence, read N- to C-terminus: Nuclear transcription factor Y subunit A-8 (328 aa).

The tract at residues 54–86 (KNISFQDQDSSSTLSSAQSSNDVTSSGDDNPSR) is disordered. The segment covering 57 to 75 (SFQDQDSSSTLSSAQSSND) has biased composition (low complexity). The segment covering 76–86 (VTSSGDDNPSR) has biased composition (polar residues). The short motif at 175–198 (FVNAKQFHAIMRRRQQRAKLEAQN) is the Subunit association domain (SAD) element. The segment at residues 205–230 (KPYLHESRHVHALKRPRGSGGRFLNT) is a DNA-binding region (NFYA/HAP2-type).

It belongs to the NFYA/HAP2 subunit family. In terms of assembly, heterotrimeric transcription factor composed of three components, NF-YA, NF-YB and NF-YC. NF-YB and NF-YC must interact and dimerize for NF-YA association and DNA binding. Expressed in the whole plant, except roots.

It is found in the nucleus. In terms of biological role, stimulates the transcription of various genes by recognizing and binding to a CCAAT motif in promoters. This Arabidopsis thaliana (Mouse-ear cress) protein is Nuclear transcription factor Y subunit A-8 (NFYA8).